The following is a 1507-amino-acid chain: ABC multidrug transporter SNQ2 (1507 aa).

Residues 1–73 (MSSSSEISVA…RSSTAELSPE (73 aa)) are disordered. Residues 41–55 (RSHEDADGDDAHSDN) are compositionally biased toward basic and acidic residues. N55 and N336 each carry an N-linked (GlcNAc...) asparagine glycan. The 256-residue stretch at 157 to 412 (CLPYTIYKAI…FYRMGYECPP (256 aa)) folds into the ABC transporter 1 domain. 3 helical membrane passes run 522–542 (AYTVITICSAIIQSLVSGSLY), 556–576 (GGVLYFCLLYYSLMGLANLSF), and 605–625 (FPFRMIGMTCFLIIIYFLSGL). N626 is a glycosylation site (N-linked (GlcNAc...) asparagine). A helical transmembrane segment spans residues 635–655 (VYLFLTMCSESINALFELIAA). The N-linked (GlcNAc...) asparagine glycan is linked to N659. The next 2 membrane-spanning stretches (helical) occupy residues 665 to 685 (SISGIVMMSISLYSTYMIQLP) and 773 to 793 (FGIMWCFLLGYIALKALITEI). The ABC transporter 2 domain maps to 857-1099 (FIWRNVCYTI…LLSYFERNGA (243 aa)). Residue N878 is glycosylated (N-linked (GlcNAc...) asparagine). Residue 893–900 (GESGAGKT) coordinates ATP. 3 helical membrane-spanning segments follow: residues 1193 to 1213 (YIMSKMMLMTVGGLYIGFTFY), 1220 to 1240 (TGLQNTLFAAFISIILSAPAM), and 1270 to 1290 (LITQYLSEIPYHFLFSAIFFV). Residue N1311 is glycosylated (N-linked (GlcNAc...) asparagine). Helical transmembrane passes span 1314-1334 (IMFQLYYIGFGLCVLYMAPNL) and 1339-1359 (VILGLCLSFLIAFCGVVQPVS). N-linked (GlcNAc...) asparagine glycosylation occurs at N1428. Residues 1459-1479 (FGLYWAYIGFNICAMVAIYYI) traverse the membrane as a helical segment.

Belongs to the ABC transporter superfamily. ABCG family. PDR (TC 3.A.1.205) subfamily.

It is found in the cell membrane. ABC multidrug transporter involved in the response to azoles such as fluconazole, itraconazole, ketoconazole and voriconazole and contributes to the development of PDR1-dependent azole resistance. Plays a role in biofilm tolerance to fluconazole. Also confers resistance to 4-nitroquinoline-N-oxide (4-NQO). In Candida glabrata (strain ATCC 2001 / BCRC 20586 / JCM 3761 / NBRC 0622 / NRRL Y-65 / CBS 138) (Yeast), this protein is ABC multidrug transporter SNQ2.